A 546-amino-acid chain; its full sequence is Membrane protein insertase YidC (546 aa).

A helical membrane pass occupies residues 6–26; it reads LILFIVFSFSLLLLWEAWQDK. The disordered stretch occupies residues 31–56; that stretch reads PATRPVAGAPAGSAAPTPSTALNAPA. The span at 37 to 56 shows a compositional bias: low complexity; sequence AGAPAGSAAPTPSTALNAPA. The next 4 helical transmembrane spans lie at 351–371, 425–445, 465–482, and 494–514; these read LVGN…LALY, LPIL…LAAV, WYIL…QVKL, and IMMI…AGLV.

This sequence belongs to the OXA1/ALB3/YidC family. Type 1 subfamily. In terms of assembly, interacts with the Sec translocase complex via SecD. Specifically interacts with transmembrane segments of nascent integral membrane proteins during membrane integration.

It is found in the cell inner membrane. Functionally, required for the insertion and/or proper folding and/or complex formation of integral membrane proteins into the membrane. Involved in integration of membrane proteins that insert both dependently and independently of the Sec translocase complex, as well as at least some lipoproteins. Aids folding of multispanning membrane proteins. The polypeptide is Membrane protein insertase YidC (Thiobacillus denitrificans (strain ATCC 25259 / T1)).